The sequence spans 309 residues: Homoserine kinase (309 aa).

ATP is bound at residue 91–101 (PIGSGLGSSAC).

This sequence belongs to the GHMP kinase family. Homoserine kinase subfamily.

The protein localises to the cytoplasm. The catalysed reaction is L-homoserine + ATP = O-phospho-L-homoserine + ADP + H(+). The protein operates within amino-acid biosynthesis; L-threonine biosynthesis; L-threonine from L-aspartate: step 4/5. Catalyzes the ATP-dependent phosphorylation of L-homoserine to L-homoserine phosphate. The chain is Homoserine kinase from Salmonella dublin (strain CT_02021853).